The following is a 299-amino-acid chain: GTPase Era (299 aa).

The Era-type G domain occupies 5–175; the sequence is RSGFVCFVGR…TDVLAGKLPP (171 aa). Positions 13-20 are G1; the sequence is GRPNTGKS. 13–20 is a binding site for GTP; sequence GRPNTGKS. The interval 39–43 is G2; it reads QTTRH. A G3 region spans residues 60 to 63; that stretch reads DTPG. GTP contacts are provided by residues 60–64 and 124–127; these read DTPGL and TKID. The interval 124–127 is G4; that stretch reads TKID. The tract at residues 154–156 is G5; sequence VSA. The region spanning 206-285 is the KH type-2 domain; sequence VRDELPHSLA…YLDLRVKIAK (80 aa).

The protein belongs to the TRAFAC class TrmE-Era-EngA-EngB-Septin-like GTPase superfamily. Era GTPase family. In terms of assembly, monomer.

It localises to the cell envelope. It is found in the secreted. Its subcellular location is the cell wall. Its function is as follows. Exhibits GTPase activity. Binds RNA but is probably not involved in ribosome assembly in mycobacteria. This chain is GTPase Era, found in Mycobacterium sp. (strain JLS).